The following is a 704-amino-acid chain: Ion-translocating oxidoreductase complex subunit C (704 aa).

4Fe-4S ferredoxin-type domains follow at residues 368–397 (MGAP…QQLY) and 407–436 (KATA…VQYF). 8 residues coordinate [4Fe-4S] cluster: C377, C380, C383, C387, C416, C419, C422, and C426. Residues 536 to 685 (RAKQAAHPMA…ADPRKAAVAA (150 aa)) are disordered. Residues 556–565 (KAAVEAAIAR) show a composition bias toward low complexity.

Belongs to the 4Fe4S bacterial-type ferredoxin family. RnfC subfamily. As to quaternary structure, the complex is composed of six subunits: RsxA, RsxB, RsxC, RsxD, RsxE and RsxG. Requires [4Fe-4S] cluster as cofactor.

The protein localises to the cell inner membrane. Functionally, part of a membrane-bound complex that couples electron transfer with translocation of ions across the membrane. Required to maintain the reduced state of SoxR. This chain is Ion-translocating oxidoreductase complex subunit C, found in Salmonella dublin (strain CT_02021853).